The chain runs to 415 residues: SNF1 protein kinase subunit beta-2 (415 aa).

Disordered stretches follow at residues 1–43 (MGTT…EMDA), 55–158 (KCSD…PSEI), and 249–276 (EKNP…SSIA). The N-myristoyl glycine moiety is linked to residue glycine 2. A compositionally biased stretch (basic residues) spans 9 to 19 (AQKKQTTKKCR). The segment covering 55 to 69 (KCSDSQDAGQPSREG) has biased composition (polar residues). Serine 66 carries the phosphoserine modification. 2 stretches are compositionally biased toward basic and acidic residues: residues 122-150 (PKQD…RAKE) and 249-264 (EKNP…EADS). Positions 154-335 (GPSEIKSSLM…LDRQQSNTDT (182 aa)) are kinase-interacting sequence (KIS); required for interaction with SNF1. The residue at position 298 (serine 298) is a Phosphoserine. The segment at 336-415 (SWLTPPQLPP…QILYTPIESS (80 aa)) is association with SNF1 kinase complex (ASC) domain; required for interaction with SNF4.

This sequence belongs to the 5'-AMP-activated protein kinase beta subunit family. Component of the SNF1 kinase complex, a heterotrimeric complex composed of the catalytic alpha subunit SNF1, one of the three related beta subunits SIP1, SIP2 or GAL83, and the regulatory gamma subunit SNF4. The beta subunit serves as a bridge between the catalytic and the regulatory subunit. Interacts (via KIS domain) with SNF1. Interacts (via ASC domain) with SNF4. In terms of processing, phosphorylated by SNF1 in vitro.

It localises to the cytoplasm. The protein resides in the cell membrane. Its function is as follows. Beta subunit of the SNF1 kinase complex, which is required for transcriptional, metabolic, and developmental adaptations in response to glucose limitation. Has a structural role, mediating heterotrimer formation, and a regulatory role, defining carbon source-regulated subcellular location and substrate specificity of the SNF1 kinase complex. Involved in the regulation of aging. Acts as a negative regulator of nuclear SNF1 activity in young cells by sequestering its activating gamma subunit at the plasma membrane. This chain is SNF1 protein kinase subunit beta-2 (SIP2), found in Saccharomyces cerevisiae (strain ATCC 204508 / S288c) (Baker's yeast).